Reading from the N-terminus, the 562-residue chain is Nucleoprotein (562 aa).

Positions 53 to 238 are binding site for the cap structure m7GTP; the sequence is MRRDKRDESD…ITQEESQINI (186 aa). Mn(2+)-binding residues include aspartate 381 and glutamate 383. Positions 391, 498, 501, and 522 each coordinate Zn(2+). Residue aspartate 526 coordinates Mn(2+).

Belongs to the arenaviridae nucleocapsid protein family. As to quaternary structure, homomultimerizes to form the nucleocapsid. Binds to viral genomic RNA. Interacts with glycoprotein G2. Interacts with protein Z; this interaction probably directs the encapsidated genome to budding sites. Interacts with protein L; this interaction does not interfere with Z-L interaction. Interacts with host IKBKE (via Protein kinase domain); the interaction inhibits IKBKE kinase activity.

The protein localises to the virion. It localises to the host cytoplasm. Its function is as follows. Encapsidates the genome, protecting it from nucleases. The encapsidated genomic RNA is termed the nucleocapsid (NC). Serves as template for viral transcription and replication. The increased presence of protein N in host cell does not seem to trigger the switch from transcription to replication as observed in other negative strain RNA viruses. Through the interaction with host IKBKE, strongly inhibits the phosphorylation and nuclear translocation of host IRF3, a protein involved in interferon activation pathway, leading to the inhibition of interferon-beta and IRF3-dependent promoters activation. Also encodes a functional 3'-5' exoribonuclease that degrades preferentially dsRNA substrates and thereby participates in the suppression of interferon induction. This is Nucleoprotein from Bear Canyon mammarenavirus (isolate Mouse/United States/AV A0070039/2000) (BCNV).